The following is a 552-amino-acid chain: Leucine-rich repeat-containing protein 31 (552 aa).

Residues 1 to 65 (MSQTRKKTSS…SETAKPLSSE (65 aa)) are disordered. Residues 31 to 41 (ESRKEDNDLKT) show a composition bias toward basic and acidic residues. Residues 42–58 (SDSQPSDWIQKTATSET) are compositionally biased toward polar residues. 9 LRR repeats span residues 227–246 (SLEV…LNSI), 255–275 (NLKV…KILD), 283–293 (ELRKLDLSCNK), 311–331 (HLQV…MSLT), 339–360 (NLQE…NLLS), 367–387 (ALKS…TALA), 395–415 (ALEV…KLLL), 423–443 (SLQV…ALLA), and 453–475 (KLQK…MFCQ).

This Homo sapiens (Human) protein is Leucine-rich repeat-containing protein 31 (LRRC31).